The sequence spans 253 residues: Probable transcriptional regulatory protein SynRCC307_1833 (253 aa).

This sequence belongs to the TACO1 family.

It localises to the cytoplasm. The protein is Probable transcriptional regulatory protein SynRCC307_1833 of Synechococcus sp. (strain RCC307).